The primary structure comprises 602 residues: Pentatricopeptide repeat-containing protein At3g04760, chloroplastic (602 aa).

Residues 1–78 (MTPLSSELVG…TDATLPTERR (78 aa)) constitute a chloroplast transit peptide. Over residues 42–64 (FSNSNPNNDNGRSFSSSGARNLQ) the composition is skewed to polar residues. A disordered region spans residues 42-85 (FSNSNPNNDNGRSFSSSGARNLQTTTTTDATLPTERRQQHSQSL). The span at 65 to 74 (TTTTTDATLP) shows a compositional bias: low complexity. PPR repeat units lie at residues 88–122 (RDTQ…GYNP), 123–153 (DVIL…LEKF), 157–191 (DVFA…DFSP), 192–226 (DTVT…NCQP), 227–261 (TVIT…GLKP), 262–296 (DMFT…GCEP), 297–331 (DVIS…KCDP), 332–366 (NVVT…GLTP), 367–401 (DAYS…GCLP), 402–436 (DIVN…GCSP), 437–471 (NSSS…GIDP), 472–506 (DEIT…EFHP), 507–541 (SVVT…GCRP), and 542–576 (NETT…DAIS).

Belongs to the PPR family. P subfamily.

It is found in the plastid. The protein localises to the chloroplast. The protein is Pentatricopeptide repeat-containing protein At3g04760, chloroplastic of Arabidopsis thaliana (Mouse-ear cress).